A 219-amino-acid chain; its full sequence is Cytidylate kinase (219 aa).

Residue 11-19 (GTAGSGKTA) participates in ATP binding.

Belongs to the cytidylate kinase family. Type 1 subfamily.

It is found in the cytoplasm. The enzyme catalyses CMP + ATP = CDP + ADP. It carries out the reaction dCMP + ATP = dCDP + ADP. The polypeptide is Cytidylate kinase (Mesoplasma florum (strain ATCC 33453 / NBRC 100688 / NCTC 11704 / L1) (Acholeplasma florum)).